The sequence spans 120 residues: Vanadium-binding protein 2 (120 aa).

The signal sequence occupies residues 1–20; sequence MSKVIFALVLVVVLVACINA. Positions 21 to 29 are excised as a propeptide; it reads TYVEFEEAY. 9 disulfide bridges follow: C34–C88, C38–C84, C42–C81, C48–C74, C52–C69, C56–C65, C92–C119, C97–C114, and C101–C111.

In terms of assembly, interacts with VIP1. In terms of tissue distribution, expressed in vanadocytes.

It is found in the cytoplasm. Acts as a vanadium reductase which may form an electron transfer cascade in conjunction with NADPH and glutathione through thiol disulfide exchange reactions. Partial cleavage of its disulfide bonds results in the reduction of V(5+) to V(4+). Binds up to 24 V(4+) ions per protein at pH 7.5. Also binds Fe(3+) and Cu(2+) and, to a lesser extent, Co(2+), Zn(2+) and Ni(2+). This Ascidia sydneiensis samea (Vanadium-rich ascidian) protein is Vanadium-binding protein 2.